The following is a 1164-amino-acid chain: Integrin alpha-5 (1164 aa).

Basic and acidic residues predominate over residues 1-14; that stretch reads MREEGGGSREKEGE. The segment at 1–119 is disordered; the sequence is MREEGGGSRE…MGSRTPGSPL (119 aa). Positions 81–90 are enriched in low complexity; that stretch reads LLPALSHSPL. One copy of the FG-GAP 1 repeat lies at 156–221; that stretch reads NLDAEAPAVL…CPWGTSPAQC (66 aa). An N-linked (GlcNAc...) asparagine glycan is attached at asparagine 197. Cysteine 212 and cysteine 221 are oxidised to a cystine. Position 240 is a phosphoserine (serine 240). 6 FG-GAP repeats span residues 241–301, 306–358, 372–424, 425–490, 491–550, and 554–617; these read SEGE…QILE, RSDF…AESY, QTRQ…GSDI, RSLY…GMEP, TPTL…GLAS, and QVLL…IFPA. Residues cysteine 269 and cysteine 289 are joined by a disulfide bond. Asparagine 295 carries N-linked (GlcNAc...) asparagine glycosylation. Cysteine 305 and cysteine 318 are oxidised to a cystine. Positions 375 and 382 each coordinate a protein. Positions 393, 395, 397, and 401 each coordinate Ca(2+). N-linked (GlcNAc...) asparagine glycans are attached at residues asparagine 410, asparagine 420, and asparagine 429. The Ca(2+) site is built by aspartate 447, asparagine 449, aspartate 451, leucine 453, aspartate 455, aspartate 514, aspartate 516, aspartate 518, tyrosine 520, aspartate 522, aspartate 578, aspartate 580, asparagine 582, tyrosine 584, and aspartate 586. A disulfide bridge connects residues cysteine 626 and cysteine 635. N-linked (GlcNAc...) asparagine glycans are attached at residues asparagine 637, asparagine 643, asparagine 706, and asparagine 722. An intrachain disulfide couples cysteine 641 to cysteine 697. A disulfide bond links cysteine 758 and cysteine 764. N-linked (GlcNAc...) asparagine glycans are attached at residues asparagine 788, asparagine 825, asparagine 837, asparagine 886, and asparagine 982. The cysteines at positions 831 and 844 are disulfide-linked. Intrachain disulfides connect cysteine 962/cysteine 1072, cysteine 983/cysteine 1036, and cysteine 1026/cysteine 1031. The tract at residues 983-1022 is disordered; the sequence is CTTSHPPNPEGLELDPEGSQHHRLQRRDVPGRSPASSGPQ. Residues 1114-1134 traverse the membrane as a helical segment; sequence LWIIILAILIGLLLLGLLIYI. Over 1135 to 1164 the chain is Cytoplasmic; sequence LYKLGFFKRSLPYGTAMEKAQLKPPATSDA. Positions 1136–1143 are interaction with HPS5; it reads YKLGFFKR. A GFFKR motif motif is present at residues 1139 to 1143; that stretch reads GFFKR.

The protein belongs to the integrin alpha chain family. In terms of assembly, heterodimer of an alpha and a beta subunit. The alpha subunit is composed of a heavy and a light chain linked by a disulfide bond. Alpha-5 associates with beta-1. Interacts with NISCH. Interacts with HPS5. Interacts with RAB21 and COMP. Interacts with CIB1. ITGA5:ITGB1 interacts with CCN3. ITGA5:ITGB1 interacts with FBN1. ITGA5:ITGB1 interacts with IL1B. ITGA5:ITGB1 interacts with ACE2. ITGA5:ITGB1 interacts with SELP. Interacts with ANGPT2. ITGA5:ITGB1 interacts with IGFBP2. ITGA5:ITGB1 interacts with IGFBP1. Post-translationally, proteolytic cleavage by PCSK5 mediates activation of the precursor.

It localises to the cell membrane. The protein resides in the cell junction. Its subcellular location is the focal adhesion. Functionally, integrin alpha-5/beta-1 (ITGA5:ITGB1) is a receptor for fibronectin and fibrinogen. It recognizes the sequence R-G-D in its ligands. ITGA5:ITGB1 binds to PLA2G2A via a site (site 2) which is distinct from the classical ligand-binding site (site 1) and this induces integrin conformational changes and enhanced ligand binding to site 1. ITGA5:ITGB1 acts as a receptor for fibrillin-1 (FBN1) and mediates R-G-D-dependent cell adhesion to FBN1. ITGA5:ITGB1 acts as a receptor for fibronectin (FN1) and mediates R-G-D-dependent cell adhesion to FN1. ITGA5:ITGB1 is a receptor for IL1B and binding is essential for IL1B signaling. ITGA5:ITGB3 is a receptor for soluble CD40LG and is required for CD40/CD40LG signaling. The chain is Integrin alpha-5 (ITGA5) from Bos taurus (Bovine).